We begin with the raw amino-acid sequence, 335 residues long: Tetraacyldisaccharide 4'-kinase (335 aa).

59–66 (TAGGNGKT) lines the ATP pocket.

This sequence belongs to the LpxK family.

It catalyses the reaction a lipid A disaccharide + ATP = a lipid IVA + ADP + H(+). It participates in glycolipid biosynthesis; lipid IV(A) biosynthesis; lipid IV(A) from (3R)-3-hydroxytetradecanoyl-[acyl-carrier-protein] and UDP-N-acetyl-alpha-D-glucosamine: step 6/6. Functionally, transfers the gamma-phosphate of ATP to the 4'-position of a tetraacyldisaccharide 1-phosphate intermediate (termed DS-1-P) to form tetraacyldisaccharide 1,4'-bis-phosphate (lipid IVA). The chain is Tetraacyldisaccharide 4'-kinase from Vibrio campbellii (strain ATCC BAA-1116).